The following is a 493-amino-acid chain: Tripartite motif-containing protein 5 (493 aa).

Residue Ala-2 is modified to N-acetylalanine. An RING-type zinc finger spans residues 15–59 (CPICLELLTQPLSLDCGHSFCQACLTANHKKSTLDKGERSCPVCR). Ser-86 is subject to Phosphoserine. The segment at 90–132 (QKVDHCARHGEKLLLFCKEDGKVICWLCERSQEHRGHHTFLTE) adopts a B box-type zinc-finger fold. The Zn(2+) site is built by Cys-95, His-98, Cys-117, and His-123. The stretch at 131–223 (TEEVAQKYQV…LTKSETEMVQ (93 aa)) forms a coiled coil. The segment at 185–198 (FEQLRDILDWEESN) is required for interaction with GABARAP and for autophagy. One can recognise a B30.2/SPRY domain in the interval 281 to 493 (LKGMLEVFRE…VPMTLCSPSS (213 aa)).

Belongs to the TRIM/RBCC family. As to quaternary structure, can form homodimers and homotrimers. In addition to lower-order dimerization, also exhibits a higher-order multimerization and both low- and high-order multimerizations are essential for its restriction activity. Interacts with BTBD1 and BTBD2. Interacts with PSMC4, PSMC5, PSMD7 and HSPA8/HSC70. Interacts (via B30.2/SPRY domain) with HSPA1A/B. Interacts with PSMC2, MAP3K7/TAK1, TAB2 and TAB3. Interacts with SQSTM1. Interacts with TRIM6 and TRIM34. Interacts with ULK1 (phosphorylated form), GABARAP, GABARAPL1, GABARAPL2, MAP1LC3A, MAP1LC3C and BECN1. In terms of processing, degraded in a proteasome-independent fashion in the absence of viral infection but in a proteasome-dependent fashion following exposure to restriction sensitive virus. Autoubiquitinated in a RING finger- and UBE2D2-dependent manner. Monoubiquitinated by TRIM21. Deubiquitinated by Yersinia YopJ. Ubiquitination may not lead to proteasomal degradation.

Its subcellular location is the cytoplasm. It localises to the nucleus. The enzyme catalyses S-ubiquitinyl-[E2 ubiquitin-conjugating enzyme]-L-cysteine + [acceptor protein]-L-lysine = [E2 ubiquitin-conjugating enzyme]-L-cysteine + N(6)-ubiquitinyl-[acceptor protein]-L-lysine.. It participates in protein modification; protein ubiquitination. Capsid-specific restriction factor that prevents infection from non-host-adapted retroviruses. Blocks viral replication early in the life cycle, after viral entry but before reverse transcription. In addition to acting as a capsid-specific restriction factor, also acts as a pattern recognition receptor that activates innate immune signaling in response to the retroviral capsid lattice. Binding to the viral capsid triggers its E3 ubiquitin ligase activity, and in concert with the heterodimeric ubiquitin conjugating enzyme complex UBE2V1-UBE2N (also known as UBC13-UEV1A complex) generates 'Lys-63'-linked polyubiquitin chains, which in turn are catalysts in the autophosphorylation of the MAP3K7/TAK1 complex (includes TAK1, TAB2, and TAB3). Activation of the MAP3K7/TAK1 complex by autophosphorylation results in the induction and expression of NF-kappa-B and MAPK-responsive inflammatory genes, thereby leading to an innate immune response in the infected cell. Plays a role in regulating autophagy through activation of autophagy regulator BECN1 by causing its dissociation from its inhibitors BCL2 and TAB2. This is Tripartite motif-containing protein 5 (TRIM5) from Pongo abelii (Sumatran orangutan).